The following is a 276-amino-acid chain: Streptothricin hydrolase (276 aa).

Catalysis depends on cysteine 176, which acts as the Nucleophile. The disordered stretch occupies residues 250–276 (PEAPAAAAAPAAGTGLSPAGPPPAPAR). Residues 252–267 (APAAAAAPAAGTGLSP) show a composition bias toward low complexity.

This sequence belongs to the isochorismatase family. In terms of assembly, homodimer. It depends on Does not require a metal cofactor. as a cofactor.

It catalyses the reaction streptothricin F + H2O = streptothricin F acid. In terms of biological role, catalyzes the hydrolysis of the amide bond of streptolidine lactam, thereby conferring streptothricin (ST) resistance. Can hydrolyze streptothricin-F and streptothricin-D. However, this strain is believed to be a ST nonproducer, which raises the possibility that its true role may not be its involvement in self-resistance to STs. May catalyze the hydrolysis of naturally occurring cyclic amide compounds that are structurally related to STs. This Streptomyces noursei (Streptomyces albulus) protein is Streptothricin hydrolase (sttH).